The primary structure comprises 162 residues: ATP synthase subunit b 1 (162 aa).

Residues 1 to 21 (MLLTAEFWVAVAFVAFLVIVW) traverse the membrane as a helical segment.

Belongs to the ATPase B chain family. In terms of assembly, F-type ATPases have 2 components, F(1) - the catalytic core - and F(0) - the membrane proton channel. F(1) has five subunits: alpha(3), beta(3), gamma(1), delta(1), epsilon(1). F(0) has three main subunits: a(1), b(2) and c(10-14). The alpha and beta chains form an alternating ring which encloses part of the gamma chain. F(1) is attached to F(0) by a central stalk formed by the gamma and epsilon chains, while a peripheral stalk is formed by the delta and b chains.

It localises to the cell inner membrane. Functionally, f(1)F(0) ATP synthase produces ATP from ADP in the presence of a proton or sodium gradient. F-type ATPases consist of two structural domains, F(1) containing the extramembraneous catalytic core and F(0) containing the membrane proton channel, linked together by a central stalk and a peripheral stalk. During catalysis, ATP synthesis in the catalytic domain of F(1) is coupled via a rotary mechanism of the central stalk subunits to proton translocation. In terms of biological role, component of the F(0) channel, it forms part of the peripheral stalk, linking F(1) to F(0). The chain is ATP synthase subunit b 1 from Methylorubrum extorquens (strain PA1) (Methylobacterium extorquens).